We begin with the raw amino-acid sequence, 142 residues long: Large ribosomal subunit protein uL22c (142 aa).

The protein belongs to the universal ribosomal protein uL22 family. As to quaternary structure, part of the 50S ribosomal subunit.

The protein localises to the plastid. Its subcellular location is the chloroplast. In terms of biological role, this protein binds specifically to 23S rRNA. Functionally, the globular domain of the protein is located near the polypeptide exit tunnel on the outside of the subunit, while an extended beta-hairpin is found that lines the wall of the exit tunnel in the center of the 70S ribosome. The polypeptide is Large ribosomal subunit protein uL22c (rpl22) (Pinus koraiensis (Korean pine)).